The sequence spans 413 residues: Isobutyryl-CoA dehydrogenase, mitochondrial (413 aa).

The transit peptide at 1–20 (MAMLRSGYRRFGCLRAALKS) directs the protein to the mitochondrion. N6-acetyllysine; alternate is present on Lys-48. The residue at position 48 (Lys-48) is an N6-succinyllysine; alternate. Residues 156–165 (YCLTEPGSGS) and 189–191 (FIS) contribute to the FAD site. Residue Ser-165 coordinates substrate. An N6-succinyllysine modification is found at Lys-211. Residue Lys-229 is modified to N6-acetyllysine. Lys-269 bears the N6-succinyllysine mark. 272–275 (NGGR) contributes to the substrate binding site. FAD contacts are provided by residues Arg-300, 310 to 311 (SQ), and 369 to 373 (QMHGG). Residue Glu-396 is the Proton acceptor of the active site. Residue 398 to 400 (SNE) coordinates FAD. Arg-408 is a binding site for substrate.

The protein belongs to the acyl-CoA dehydrogenase family. In terms of assembly, homotetramer, formed by a dimer of dimers. The cofactor is FAD.

It is found in the mitochondrion. It carries out the reaction 2-methylpropanoyl-CoA + oxidized [electron-transfer flavoprotein] + H(+) = 2-methylpropenoyl-CoA + reduced [electron-transfer flavoprotein]. The enzyme catalyses (2S)-2-methylbutanoyl-CoA + oxidized [electron-transfer flavoprotein] + H(+) = (2E)-2-methylbut-2-enoyl-CoA + reduced [electron-transfer flavoprotein]. The catalysed reaction is propanoyl-CoA + oxidized [electron-transfer flavoprotein] + H(+) = acryloyl-CoA + reduced [electron-transfer flavoprotein]. It functions in the pathway amino-acid degradation; L-valine degradation. In terms of biological role, isobutyryl-CoA dehydrogenase which catalyzes the conversion of 2-methylpropanoyl-CoA to (2E)-2-methylpropenoyl-CoA in the valine catabolic pathway. To a lesser extent, also able to catalyze the oxidation of (2S)-2-methylbutanoyl-CoA. The chain is Isobutyryl-CoA dehydrogenase, mitochondrial from Mus musculus (Mouse).